The sequence spans 373 residues: Protein RETARDED ROOT GROWTH, mitochondrial (373 aa).

Residues 1–49 (MGKWRAVAALLLRNQLLNSSKRLNLSSSPCVSKHPTIGLASRFLNFRHF) constitute a mitochondrion transit peptide. Residues 346-362 (EWCIIFLLAIENAIGIY) form a helical membrane-spanning segment.

The protein belongs to the RMD1/sif2 family. Predominantly expressed in the root meristem, in the primary and lateral root tips. Also present in leaves and pollen.

The protein resides in the mitochondrion membrane. It is found in the mitochondrion. Its function is as follows. Required for the maintenance of mitochondrial structure. Positive regulator of cell division and endoreduplication but negative regulator of cell expansion in the postembryonic root meristem, thus leading to the promotion of root growth. The protein is Protein RETARDED ROOT GROWTH, mitochondrial of Arabidopsis thaliana (Mouse-ear cress).